Consider the following 280-residue polypeptide: Thioesterase pynI (280 aa).

Positions 136 to 145 are enriched in acidic residues; it reads LADDSDDEDN. The segment at 136-167 is disordered; sequence LADDSDDEDNRSDASDASDDGSTMSDEEEEDD.

It belongs to the AMT4 thioesterase family.

Its pathway is secondary metabolite biosynthesis. Thioesterase; part of the gene cluster that mediates the biosynthesis of pyranonigrins, a family of antioxidative compounds. The first step of pyranonigrins biosynthesis is performed by the hybrid PKS-NRPS synthetase that condenses 6 malonyl-CoA units to an acetyl starter unit, to form a 1,3,5-trioxotetradecane-6,8-dienyl-ACP. The enoyl reductase (ER) domain of pynA is likely to be functional during the first two rounds of polyketide chain extension, to generate the saturated C-C bonds of the alkyl side chain. PynA subsequently forms the amide bond between the acyl chain and L-serine. Although pynA has a terminal reductase domain, it appears to require the thioesterase pynI for the release of the straight-chain intermediate from pynA via the formation of a tetramic acid pyranonigrin J. The methyltransferase pynC then coverts pyranonigrin J to pyranonigrin I via N-methylation. The FAD-dependent monooxygenase pynG catalyzes an epoxidation-mediated cyclization to form the dihydro-gamma-pyrone moiety, followed by pynD-catalyzed oxidation of the alcohol to the ketone and enolization to yield the characteristic tetramic acid-fused gamma-pyrone core of pyranonigrin H. Pyranonigrin H is substrate of pynH for dehydration-mediated exo-methylene formation from the serine side chain to produce pyranonigrin E, before the oxidase pynE reduces the exo-methylene of pyranonigrin E into a pendant methyl to form pyranonigrin G. The FAD-linked oxidoreductase pynB performs the reverse reaction and converts pyranonigrin G back to pyranonigrin E. This chain is Thioesterase pynI, found in Aspergillus niger (strain ATCC MYA-4892 / CBS 513.88 / FGSC A1513).